Reading from the N-terminus, the 431-residue chain is Trigger factor (431 aa).

The PPIase FKBP-type domain maps to 165 to 250 (GDTVVIDFDG…IHELKRKELP (86 aa)).

This sequence belongs to the FKBP-type PPIase family. Tig subfamily.

It is found in the cytoplasm. It carries out the reaction [protein]-peptidylproline (omega=180) = [protein]-peptidylproline (omega=0). Involved in protein export. Acts as a chaperone by maintaining the newly synthesized protein in an open conformation. Functions as a peptidyl-prolyl cis-trans isomerase. In Leuconostoc citreum (strain KM20), this protein is Trigger factor.